Consider the following 145-residue polypeptide: Large ribosomal subunit protein uL13 (145 aa).

It belongs to the universal ribosomal protein uL13 family. Part of the 50S ribosomal subunit. Interacts weakly with proteins L3 and L6.

Functionally, this protein is one of the early assembly proteins of the 50S ribosomal subunit. Binds to 23S rRNA. In Haloarcula marismortui (strain ATCC 43049 / DSM 3752 / JCM 8966 / VKM B-1809) (Halobacterium marismortui), this protein is Large ribosomal subunit protein uL13.